A 278-amino-acid chain; its full sequence is Dermonecrotic toxin Ls4SicTox-alphaIII1ii (278 aa).

The active site involves H5. 2 residues coordinate Mg(2+): E25 and D27. The active-site Nucleophile is H40. A disulfide bridge links C44 with C50. A Mg(2+)-binding site is contributed by D84.

The protein belongs to the arthropod phospholipase D family. Class I subfamily. The cofactor is Mg(2+). In terms of tissue distribution, expressed by the venom gland.

It localises to the secreted. The enzyme catalyses an N-(acyl)-sphingosylphosphocholine = an N-(acyl)-sphingosyl-1,3-cyclic phosphate + choline. The catalysed reaction is an N-(acyl)-sphingosylphosphoethanolamine = an N-(acyl)-sphingosyl-1,3-cyclic phosphate + ethanolamine. It carries out the reaction a 1-acyl-sn-glycero-3-phosphocholine = a 1-acyl-sn-glycero-2,3-cyclic phosphate + choline. It catalyses the reaction a 1-acyl-sn-glycero-3-phosphoethanolamine = a 1-acyl-sn-glycero-2,3-cyclic phosphate + ethanolamine. In terms of biological role, dermonecrotic toxins cleave the phosphodiester linkage between the phosphate and headgroup of certain phospholipids (sphingolipid and lysolipid substrates), forming an alcohol (often choline) and a cyclic phosphate. This toxin acts on sphingomyelin (SM). It may also act on ceramide phosphoethanolamine (CPE), lysophosphatidylcholine (LPC) and lysophosphatidylethanolamine (LPE), but not on lysophosphatidylserine (LPS), and lysophosphatidylglycerol (LPG). It acts by transphosphatidylation, releasing exclusively cyclic phosphate products as second products. Induces dermonecrosis, hemolysis, increased vascular permeability, edema, inflammatory response, and platelet aggregation. The polypeptide is Dermonecrotic toxin Ls4SicTox-alphaIII1ii (Loxosceles sp. (strain 4 GJB-2008) (Recluse spider)).